Here is a 287-residue protein sequence, read N- to C-terminus: NADH-cytochrome b5 reductase 1 (287 aa).

A helical membrane pass occupies residues 5–25; the sequence is FEALVTALVLAVSFIFIYGKF. In terms of domain architecture, FAD-binding FR-type spans 41 to 145; the sequence is KDWQEFSLLT…RGPKGFYHYE (105 aa). Residues 125–142 and 151–183 each bind FAD; these read AELA…KGFY and EIGM…RVCL.

The protein belongs to the flavoprotein pyridine nucleotide cytochrome reductase family. Monomer. Component of the 2-(3-amino-3-carboxypropyl)histidine synthase complex composed of DPH1, DPH2, DPH3 and a NADH-dependent reductase, predominantly CBR1. It depends on FAD as a cofactor.

The protein resides in the mitochondrion outer membrane. It carries out the reaction 2 Fe(III)-[cytochrome b5] + NADH = 2 Fe(II)-[cytochrome b5] + NAD(+) + H(+). It catalyses the reaction 2 Fe(3+)-[Dph3] + NADH = 2 Fe(2+)-[Dph3] + NAD(+) + H(+). It functions in the pathway protein modification; peptidyl-diphthamide biosynthesis. Its function is as follows. NADH-dependent reductase for DPH3 and cytochrome b5. Required for the first step of diphthamide biosynthesis, a post-translational modification of histidine which occurs in elongation factor 2. DPH1 and DPH2 transfer a 3-amino-3-carboxypropyl (ACP) group from S-adenosyl-L-methionine (SAM) to a histidine residue, the reaction is assisted by a reduction system comprising DPH3 and a NADH-dependent reductase, predominantly CBR1. By reducing DPH3, also involved in the formation of the tRNA wobble base modification mcm5s 2U (5-methoxycarbonylmethyl-2-thiouridine), mediated by the elongator complex. The cytochrome b5/NADH cytochrome b5 reductase electron transfer system supports the catalytic activity of several sterol biosynthetic enzymes. The protein is NADH-cytochrome b5 reductase 1 (CBR1) of Eremothecium gossypii (strain ATCC 10895 / CBS 109.51 / FGSC 9923 / NRRL Y-1056) (Yeast).